Consider the following 139-residue polypeptide: Protein FAM237B (139 aa).

Positions Met-1 to Ala-24 are cleaved as a signal peptide. Met-112 carries the post-translational modification Methionine amide. Residues Gly-113–Glu-139 constitute a propeptide, removed in the mature form.

The active form requires C-terminal amidation and disulfide bond formation.

Its subcellular location is the secreted. May be capable of activating GPR83 via the GNAQ signaling pathway. This chain is Protein FAM237B, found in Homo sapiens (Human).